The following is a 433-amino-acid chain: Enolase (433 aa).

(2R)-2-phosphoglycerate is bound at residue Q167. The active-site Proton donor is E209. A Mg(2+)-binding site is contributed by D246. The Plasminogen-binding motif motif lies at 252-260 (FYDAEKKEY). Mg(2+) is bound by residues E291 and D318. Positions 343, 372, 373, and 394 each coordinate (2R)-2-phosphoglycerate. K343 (proton acceptor) is an active-site residue.

Belongs to the enolase family. As to quaternary structure, component of the RNA degradosome, a multiprotein complex involved in RNA processing and mRNA degradation. Mg(2+) is required as a cofactor.

Its subcellular location is the cell inner membrane. The protein resides in the cell outer membrane. It is found in the cytoplasm. The protein localises to the secreted. It localises to the cell surface. The catalysed reaction is (2R)-2-phosphoglycerate = phosphoenolpyruvate + H2O. Its pathway is carbohydrate degradation; glycolysis; pyruvate from D-glyceraldehyde 3-phosphate: step 4/5. In terms of biological role, catalyzes the reversible conversion of 2-phosphoglycerate (2-PG) into phosphoenolpyruvate (PEP). It is essential for the degradation of carbohydrates via glycolysis. Functionally, 'Moonlights' as a plasminogen receptor and plasmin activator. Binds host (human) plasminogen in vitro. Binds human plasmin and plasminogen on the cell surface; enhances the activity of host tissue-specific plasminogen activator (tPA). Plasmin bound to bacteria is partially protected from its physiological inhibitor alpha-2AP (SERPINF2). This chain is Enolase, found in Aeromonas hydrophila.